The sequence spans 208 residues: 3-isopropylmalate dehydratase small subunit 2 (208 aa).

Belongs to the LeuD family. LeuD type 1 subfamily. As to quaternary structure, heterodimer of LeuC and LeuD.

It catalyses the reaction (2R,3S)-3-isopropylmalate = (2S)-2-isopropylmalate. The protein operates within amino-acid biosynthesis; L-leucine biosynthesis; L-leucine from 3-methyl-2-oxobutanoate: step 2/4. In terms of biological role, catalyzes the isomerization between 2-isopropylmalate and 3-isopropylmalate, via the formation of 2-isopropylmaleate. The chain is 3-isopropylmalate dehydratase small subunit 2 (leuD2) from Salmonella typhimurium (strain LT2 / SGSC1412 / ATCC 700720).